The following is a 153-amino-acid chain: uncharacterized protein (153 aa).

Positions 1–22 are cleaved as a signal peptide; sequence MKAFNKLFSLVVASVLVFSLAG. Cys23 carries the N-palmitoyl cysteine lipid modification. Cys23 carries the S-diacylglycerol cysteine lipid modification.

To L.monocytogenes lmo0207.

The protein resides in the cell membrane. This is an uncharacterized protein from Escherichia coli (strain K12).